The sequence spans 571 residues: Urease subunit alpha (571 aa).

The region spanning 133-571 is the Urease domain; that stretch reads GGIDTHVHFI…LPLTQRYFLF (439 aa). 3 residues coordinate Ni(2+): H138, H140, and K221. The residue at position 221 (K221) is an N6-carboxylysine. Residue H223 coordinates substrate. Residues H250 and H276 each coordinate Ni(2+). Catalysis depends on H324, which acts as the Proton donor. Residue D364 coordinates Ni(2+).

It belongs to the metallo-dependent hydrolases superfamily. Urease alpha subunit family. As to quaternary structure, heterotrimer of UreA (gamma), UreB (beta) and UreC (alpha) subunits. Three heterotrimers associate to form the active enzyme. Ni cation serves as cofactor. Carboxylation allows a single lysine to coordinate two nickel ions.

It localises to the cytoplasm. It catalyses the reaction urea + 2 H2O + H(+) = hydrogencarbonate + 2 NH4(+). It functions in the pathway nitrogen metabolism; urea degradation; CO(2) and NH(3) from urea (urease route): step 1/1. This is Urease subunit alpha from Staphylococcus aureus (strain bovine RF122 / ET3-1).